The primary structure comprises 31 residues: GSTPCGESCVWIPCISGIVGCSCSNKVCYMD.

The cyclopeptide (Gly-Asp) cross-link spans 1–31 (GSTPCGESCVWIPCISGIVGCSCSNKVCYMD). 3 cysteine pairs are disulfide-bonded: C5–C21, C9–C23, and C14–C28.

This is a cyclic peptide. As to expression, detected in seeds (at protein level).

Its function is as follows. Probably participates in a plant defense mechanism. In Pigea enneasperma (Spade flower), this protein is Cyclotide hyen-I.